Here is a 229-residue protein sequence, read N- to C-terminus: Large ribosomal subunit protein uL1 (229 aa).

The protein belongs to the universal ribosomal protein uL1 family. Part of the 50S ribosomal subunit.

Binds directly to 23S rRNA. The L1 stalk is quite mobile in the ribosome, and is involved in E site tRNA release. Functionally, protein L1 is also a translational repressor protein, it controls the translation of the L11 operon by binding to its mRNA. This Clostridium botulinum (strain ATCC 19397 / Type A) protein is Large ribosomal subunit protein uL1.